Here is a 215-residue protein sequence, read N- to C-terminus: Glutathione S-transferase D2 (215 aa).

The GST N-terminal domain occupies 1 to 80 (MDFYYMPGGG…YLVEKYGKDD (80 aa)). Glutathione contacts are provided by residues 50–52 (HTI) and 64–66 (ESR). The region spanning 86-212 (DPKKRAVINQ…MKALFDARKL (127 aa)) is the GST C-terminal domain.

This sequence belongs to the GST superfamily. Delta family. As to quaternary structure, homodimer.

It carries out the reaction RX + glutathione = an S-substituted glutathione + a halide anion + H(+). Conjugation of reduced glutathione to a wide number of exogenous and endogenous hydrophobic electrophiles. May be involved in detoxification. This chain is Glutathione S-transferase D2, found in Drosophila melanogaster (Fruit fly).